Reading from the N-terminus, the 188-residue chain is dCTP deaminase (188 aa).

DCTP contacts are provided by residues 111 to 116, 135 to 137, Q156, Y170, and Q180; these read KSTYAR and TLE. The active-site Proton donor/acceptor is the E137.

Belongs to the dCTP deaminase family. In terms of assembly, homotrimer.

The catalysed reaction is dCTP + H2O + H(+) = dUTP + NH4(+). The protein operates within pyrimidine metabolism; dUMP biosynthesis; dUMP from dCTP (dUTP route): step 1/2. In terms of biological role, catalyzes the deamination of dCTP to dUTP. This chain is dCTP deaminase, found in Azoarcus sp. (strain BH72).